The primary structure comprises 515 residues: C-glycoside 3-oxidase (515 aa).

An FAD-binding site is contributed by glutamate 41. Over residues 62-82 (ERAHAQRRSEGPHAREDDDRV) the composition is skewed to basic and acidic residues. The disordered stretch occupies residues 62–90 (ERAHAQRRSEGPHAREDDDRVGGIVKSAQ). FAD is bound by residues serine 118, asparagine 120, methionine 124, threonine 129, alanine 131, and valine 237. The Proton acceptor role is filled by histidine 444. Positions 478 and 490 each coordinate FAD.

It belongs to the GMC oxidoreductase family. In terms of assembly, monomer. It depends on FAD as a cofactor.

It catalyses the reaction isoorientin + O2 = 3''-dehydroisoorientin + H2O2. The enzyme catalyses mangiferin + O2 = 3'-dehydromangiferin + H2O2. Functionally, FAD-dependent C-glycoside-metabolizing enzyme that participates in the degradation of certain C-glycosides by catalyzing the oxidation of the hydroxyl group at the C3 position of the sugar moiety. Shows oxidase activity toward C-glycosides such as isoorientin and mangiferin but cannot use carminic acid, puerarin, orientin or aloesin. Shows weak activity (100 to 1000-fold lower) with O-glycosides. Probably plays a crucial role in the metabolism of C-glycosides in nature. In Microbacterium trichothecenolyticum (Aureobacterium trichothecenolyticum), this protein is C-glycoside 3-oxidase.